We begin with the raw amino-acid sequence, 311 residues long: Forkhead box protein R2 (311 aa).

Disordered regions lie at residues 56–76 (PPEMPQKRRPSPDGDGPPCEP) and 90–171 (LGSQ…QSPE). Residues 115 to 128 (QKDEGSNCSEDKVV) show a composition bias toward basic and acidic residues. The segment covering 129 to 143 (ESLPSSSSEQSPLQK) has biased composition (low complexity). Over residues 153 to 164 (ELTEEEAEEPDD) the composition is skewed to acidic residues. The fork-head DNA-binding region spans 192–294 (RPPLNCSHLI…RVLAFAQRER (103 aa)).

Expressed in breast cancer cell lines and primary cancer.

It localises to the nucleus. In Homo sapiens (Human), this protein is Forkhead box protein R2 (FOXR2).